Here is a 454-residue protein sequence, read N- to C-terminus: Mitochondrial dynamics protein MID49 (454 aa).

Residues 1–22 (MAEFSQKRGKRRSDEGLGSMVD) lie on the Mitochondrial intermembrane side of the membrane. At Ser13 the chain carries Phosphoserine. A helical transmembrane segment spans residues 23–43 (FLLANARLVLGVGGAAVLGIA). At 44-454 (TLAVKRFIDR…SGLQEPEGLL (411 aa)) the chain is on the cytoplasmic side. Residues 76 to 119 (ATPHLQPRPPPAALSQPVLPLAPSSSAPEGPAETDPEVTPQLSS) form a disordered region. Low complexity predominate over residues 88 to 103 (ALSQPVLPLAPSSSAP).

It belongs to the MID49/MID51 family. Interacts with DNM1L. In terms of tissue distribution, expressed in all tissues tested with highest expression in heart and skeletal muscle.

The protein localises to the mitochondrion outer membrane. In terms of biological role, mitochondrial outer membrane protein involved in the regulation of mitochondrial organization. It is required for mitochondrial fission and promotes the recruitment and association of the fission mediator dynamin-related protein 1 (DNM1L) to the mitochondrial surface independently of the mitochondrial fission FIS1 and MFF proteins. Regulates DNM1L GTPase activity. The protein is Mitochondrial dynamics protein MID49 (MIEF2) of Homo sapiens (Human).